A 450-amino-acid polypeptide reads, in one-letter code: Putative serine/threonine-protein kinase R517/R518 (450 aa).

Positions 9–290 (KMTDTVLGKG…WSELFHHYWF (282 aa)) constitute a Protein kinase domain. Residues 15–23 (LGKGGFSEV) and Lys-38 each bind ATP. The active-site Proton acceptor is Asp-140.

Belongs to the protein kinase superfamily. Ser/Thr protein kinase family.

It carries out the reaction L-seryl-[protein] + ATP = O-phospho-L-seryl-[protein] + ADP + H(+). It catalyses the reaction L-threonyl-[protein] + ATP = O-phospho-L-threonyl-[protein] + ADP + H(+). This chain is Putative serine/threonine-protein kinase R517/R518, found in Acanthamoeba polyphaga mimivirus (APMV).